A 111-amino-acid polypeptide reads, in one-letter code: MGDNNRATLGSDAAANAPDAAAFDKGKGKATEDPSLEMSMDEDEESEENDDEDGGDNLEPISADNIISGGRRTRGKTIDFQEAAEKIQGDDDDEDDDEEFQPNDDDDNMRD.

The interval 1–111 (MGDNNRATLG…PNDDDDNMRD (111 aa)) is disordered. The span at 12 to 21 (DAAANAPDAA) shows a compositional bias: low complexity. The span at 22–32 (AFDKGKGKATE) shows a compositional bias: basic and acidic residues. Residues 39-56 (SMDEDEESEENDDEDGGD) are compositionally biased toward acidic residues. Basic and acidic residues predominate over residues 76 to 89 (KTIDFQEAAEKIQG). Residues 90–111 (DDDDEDDDEEFQPNDDDDNMRD) show a composition bias toward acidic residues.

It belongs to the CHZ1 family. As to quaternary structure, forms a heterotrimer with H2A.Z-H2B, stabilizing the association of the histone dimer. Also, with a lower affinity, forms a heterotrimer with H2A-H2B.

The protein resides in the nucleus. In terms of biological role, forms a chaperone-bound H2A.Z-H2B complex that acts as a source for SWR1 complex-dependent H2A to H2A.Z histone replacement in chromatin. The protein is Histone H2A.Z-specific chaperone chz1 (chz1) of Aspergillus terreus (strain NIH 2624 / FGSC A1156).